The chain runs to 110 residues: Thioredoxin (110 aa).

Residues K3–A108 form the Thioredoxin domain. Residues C32 and C35 are joined by a disulfide bond. K105 is modified (N6,N6-dimethyllysine; alternate). Position 105 is an N6-methyllysine; alternate (K105).

Its function is as follows. Participates in various redox reactions through the reversible oxidation of its active center dithiol to a disulfide and catalyzes dithiol-disulfide exchange reactions. In Chloroflexus aurantiacus (strain ATCC 29366 / DSM 635 / J-10-fl), this protein is Thioredoxin (trxA).